The primary structure comprises 252 residues: 3-dehydroquinate dehydratase (252 aa).

3-dehydroquinate is bound by residues Ser21, 46–48 (EWR), and Arg82. His143 acts as the Proton donor/acceptor in catalysis. Lys170 functions as the Schiff-base intermediate with substrate in the catalytic mechanism. Arg213, Ser232, and Gln236 together coordinate 3-dehydroquinate.

Belongs to the type-I 3-dehydroquinase family. Homodimer.

It catalyses the reaction 3-dehydroquinate = 3-dehydroshikimate + H2O. It participates in metabolic intermediate biosynthesis; chorismate biosynthesis; chorismate from D-erythrose 4-phosphate and phosphoenolpyruvate: step 3/7. Functionally, involved in the third step of the chorismate pathway, which leads to the biosynthesis of aromatic amino acids. Catalyzes the cis-dehydration of 3-dehydroquinate (DHQ) and introduces the first double bond of the aromatic ring to yield 3-dehydroshikimate. The protein is 3-dehydroquinate dehydratase of Escherichia coli (strain 55989 / EAEC).